We begin with the raw amino-acid sequence, 483 residues long: PAT complex subunit CCDC47 (483 aa).

The signal sequence occupies residues 1 to 20 (MKAFHTFCVVLLVFGSVSEA). The Cytoplasmic segment spans residues 21-135 (KFDDFEDEED…PAHLQNSWES (115 aa)). Positions 46–118 (MEDSVTESPQ…PDTSSSKNKD (73 aa)) are disordered. Over residues 60-104 (TEDDEDETTVELEGQDENQEGDFEDADTQEGDTESEPYDDEEFEG) the composition is skewed to acidic residues. Basic and acidic residues predominate over residues 105–118 (YEDKPDTSSSKNKD). A helical membrane pass occupies residues 136 to 155 (YYLEILMVTGLLAYIMNYII). The Lumenal portion of the chain corresponds to 156 to 483 (GKNKNSRLAQ…KMKQIKVKAM (328 aa)). Asparagine 178 is a glycosylation site (N-linked (GlcNAc...) asparagine). Residues 424–483 (QRQEAAQSRREEKKRAEKERIMNEEDPEKQRRLEEAALRREQKKLEKKQMKMKQIKVKAM) form a disordered region. The span at 430–472 (QSRREEKKRAEKERIMNEEDPEKQRRLEEAALRREQKKLEKKQ) shows a compositional bias: basic and acidic residues. Residues 450-483 (PEKQRRLEEAALRREQKKLEKKQMKMKQIKVKAM) adopt a coiled-coil conformation. Residues 473–483 (MKMKQIKVKAM) are compositionally biased toward basic residues.

It belongs to the CCDC47 family. As to quaternary structure, component of the PAT complex, composed of WDR83OS/Asterix and CCDC47. The PAT complex is part of the multi-pass translocon (MPT) complex, composed of three subcomplexes, the GEL complex (composed of RAB5IF/OPTI and TMCO1), the BOS complex (composed of NCLN/Nicalin, NOMO and TMEM147) and the PAT complex (composed of WDR83OS/Asterix and CCDC47). The MPT complex associates with the SEC61 complex. Interacts with VCP, HSPA5, DERL1, DERL2 and SELENOS.

The protein resides in the endoplasmic reticulum membrane. The protein localises to the rough endoplasmic reticulum membrane. In terms of biological role, component of the multi-pass translocon (MPT) complex that mediates insertion of multi-pass membrane proteins into the lipid bilayer of membranes. The MPT complex takes over after the SEC61 complex: following membrane insertion of the first few transmembrane segments of proteins by the SEC61 complex, the MPT complex occludes the lateral gate of the SEC61 complex to promote insertion of subsequent transmembrane regions. Within the MPT complex, the PAT subcomplex sequesters any highly polar regions in the transmembrane domains away from the non-polar membrane environment until they can be buried in the interior of the fully assembled protein. Within the PAT subcomplex, CCDC47 occludes the lateral gate of the SEC61 complex. Involved in the regulation of calcium ion homeostasis in the ER. Required for proper protein degradation via the ERAD (ER-associated degradation) pathway. Has an essential role in the maintenance of ER organization during embryogenesis. The chain is PAT complex subunit CCDC47 from Homo sapiens (Human).